Consider the following 249-residue polypeptide: Type I iodothyronine deiodinase (249 aa).

Residues 1–12 (MGLPRPGLWLKR) lie on the Extracellular side of the membrane. The chain crosses the membrane as a helical; Signal-anchor for type III membrane protein span at residues 13–33 (LWVLVQVAVEVAVGKVLMTLF). Over 34-249 (PERVKQNILA…VRAVLEELHS (216 aa)) the chain is Cytoplasmic. Selenocysteine 126 is a catalytic residue. A non-standard amino acid (selenocysteine) is located at residue selenocysteine 126.

This sequence belongs to the iodothyronine deiodinase family. Predominantly monomer. Can form homodimers but homodimerization is not essential for enzyme activity.

The protein resides in the cell membrane. It is found in the endoplasmic reticulum membrane. The protein localises to the basolateral cell membrane. The catalysed reaction is 3,3',5-triiodo-L-thyronine + iodide + A + H(+) = L-thyroxine + AH2. It carries out the reaction 3,3',5'-triiodo-L-thyronine + iodide + A + H(+) = L-thyroxine + AH2. The enzyme catalyses 3,3'-diiodo-L-thyronine + iodide + A + H(+) = 3,3',5'-triiodo-L-thyronine + AH2. It catalyses the reaction 3,3'-diiodo-L-thyronine + iodide + A + H(+) = 3,3',5-triiodo-L-thyronine + AH2. The catalysed reaction is 3'-iodo-L-thyronine + iodide + A + H(+) = 3',5'-diiodo-L-thyronine + AH2. It carries out the reaction 3-iodo-L-thyronine + iodide + A + H(+) = 3,5-diiodo-L-thyronine + AH2. The enzyme catalyses 3-iodo-L-thyronine + iodide + A + H(+) = 3,3'-diiodo-L-thyronine + AH2. It catalyses the reaction 3,3'-diiodothyronamine + iodide + A + H(+) = 3,3',5'-triiodothyronamine + AH2. The catalysed reaction is 3'-iodothyronamine + iodide + A + H(+) = 3',5'-diiodothyronamine + AH2. It carries out the reaction 3-iodothyronamine + iodide + A + H(+) = 3,3'-diiodothyronamine + AH2. The enzyme catalyses 3,3'-diiodothyronamine + iodide + A + H(+) = 3,3',5-triiodothyronamine + AH2. It catalyses the reaction 3-iodothyronamine + iodide + A + H(+) = 3,5-diiodothyronamine + AH2. The catalysed reaction is 3,3'-diiodo-L-thyronine sulfate + iodide + A + H(+) = 3,3',5'-triiodo-L-thyronine sulfate + AH2. It carries out the reaction 3,3',5'-triiodo-L-thyronine sulfate + iodide + A + H(+) = L-thyroxine sulfate + AH2. The enzyme catalyses 3,3'-diiodo-L-thyronine sulfate + iodide + A + H(+) = 3,3',5-triiodo-L-thyronine sulfate + AH2. Plays a crucial role in the metabolism of thyroid hormones (TH) and has specific roles in TH activation and inactivation by deiodination. Catalyzes the deiodination of L-thyroxine (T4) to 3,5,3'-triiodothyronine (T3) via outer-ring deiodination (ORD) and of T4 to 3,3',5'-triiodothyronine (rT3) via inner-ring deiodination (IRD). Catalyzes the deiodiantion of rT3 to 3,3'-diiodothyronine (3,3'-T2) and 3',5'-diiodothyronine (3',5'-T2) to 3'-monoiodothyronine (3'-T1) via ORD. Catalyzes the deiodination of T3 to 3,3'-T2, 3,5-diiodothyronine (3,5-T2) to 3-monoiodothyronine (3-T1) and 3,3'-T2 to 3-T1 via IRD. Catalyzes the phenolic ring deiodinations of 3,3',5'-triiodothyronamine, 3',5'-diiodothyronamine and 3,3'-diiodothyronamine as well as tyrosyl ring deiodinations of 3,5,3'-triiodothyronamine and 3,5-diiodothyronamine. Catalyzes the deiodination of L-thyroxine sulfate and 3,3',5-triiodo-L-thyronine sulfate via IRD and of 3,3',5'-triiodo-L-thyronine sulfate via ORD. This is Type I iodothyronine deiodinase (DIO1) from Oryctolagus cuniculus (Rabbit).